We begin with the raw amino-acid sequence, 315 residues long: Ribosomal RNA small subunit methyltransferase H (315 aa).

Residues 37-39 (GGH), Asp57, Phe83, Asp105, and Gln112 each bind S-adenosyl-L-methionine.

This sequence belongs to the methyltransferase superfamily. RsmH family.

It is found in the cytoplasm. The enzyme catalyses cytidine(1402) in 16S rRNA + S-adenosyl-L-methionine = N(4)-methylcytidine(1402) in 16S rRNA + S-adenosyl-L-homocysteine + H(+). In terms of biological role, specifically methylates the N4 position of cytidine in position 1402 (C1402) of 16S rRNA. The chain is Ribosomal RNA small subunit methyltransferase H from Pseudomonas fluorescens (strain Pf0-1).